We begin with the raw amino-acid sequence, 243 residues long: Uridylate kinase (243 aa).

Position 15–18 (15–18 (KMSG)) interacts with ATP. Glycine 57 contributes to the UMP binding site. ATP-binding residues include glycine 58 and arginine 62. Residues aspartate 77 and 138 to 145 (TGNPLVTT) contribute to the UMP site. ATP is bound by residues threonine 165, asparagine 166, tyrosine 171, and aspartate 174.

This sequence belongs to the UMP kinase family. Homohexamer.

It localises to the cytoplasm. It catalyses the reaction UMP + ATP = UDP + ADP. The protein operates within pyrimidine metabolism; CTP biosynthesis via de novo pathway; UDP from UMP (UMPK route): step 1/1. With respect to regulation, inhibited by UTP. Its function is as follows. Catalyzes the reversible phosphorylation of UMP to UDP. This Coxiella burnetii (strain RSA 493 / Nine Mile phase I) protein is Uridylate kinase.